We begin with the raw amino-acid sequence, 431 residues long: Enolase (431 aa).

Residue Gln-163 coordinates (2R)-2-phosphoglycerate. Glu-205 acts as the Proton donor in catalysis. Positions 242, 288, and 315 each coordinate Mg(2+). (2R)-2-phosphoglycerate-binding residues include Lys-340, Arg-369, Ser-370, and Lys-391. Catalysis depends on Lys-340, which acts as the Proton acceptor.

Belongs to the enolase family. Requires Mg(2+) as cofactor.

It is found in the cytoplasm. The protein resides in the secreted. Its subcellular location is the cell surface. It catalyses the reaction (2R)-2-phosphoglycerate = phosphoenolpyruvate + H2O. Its pathway is carbohydrate degradation; glycolysis; pyruvate from D-glyceraldehyde 3-phosphate: step 4/5. In terms of biological role, catalyzes the reversible conversion of 2-phosphoglycerate (2-PG) into phosphoenolpyruvate (PEP). It is essential for the degradation of carbohydrates via glycolysis. The sequence is that of Enolase from Bacillus anthracis (strain A0248).